The primary structure comprises 460 residues: MASLLQSDRVLYLVQGEKKVRAPLSQLYFCRYCSELRSLECVSHEVDSHYCPSCLENMPSAEAKLKKNRCANCFDCPGCMHTLSTRATSISTQLPDDPAKTTMKKAYYLACGFCRWTSRDVGMADKSVASGGWQEPENPHTQRMNKLIEYYQQLAQKEKVERDRKKLARRRNYMPLAFSDKYGLGTRLQRPRAGASISTLAGLSLKEGEDQKEIKIEPAQAVDEVEPLPEDYYTRPVNLTEVTTLQQRLLQPDFQPVCASQLYPRHKHLLIKRSLRCRKCEHNLSKPEFNPTSIKFKIQLVAVNYIPEVRIMSIPNLRYMKESQVLLTLTNPVENLTHVTLFECEEGDPDDINSTAKVVVPPKELVLAGKDAAAEYDELAEPQDFQDDPDIIAFRKANKVGIFIKVTPQREEGEVTVCFKMKHDFKNLAAPIRPIEESDQGTEVIWLTQHVELSLGPLLP.

A2 is modified (N-acetylalanine). A coiled-coil region spans residues 152 to 172; it reads QQLAQKEKVERDRKKLARRRN. S196 is subject to Phosphoserine. K215 is covalently cross-linked (Glycyl lysine isopeptide (Lys-Gly) (interchain with G-Cter in SUMO2)). T407 carries the phosphothreonine modification.

It belongs to the dynactin subunit 4 family. As to quaternary structure, subunit of dynactin, a multiprotein complex part of a tripartite complex with dynein and a adapter, such as BICDL1, BICD2 or HOOK3. The dynactin complex is built around ACTR1A/ACTB filament and consists of an actin-related filament composed of a shoulder domain, a pointed end and a barbed end. Its length is defined by its flexible shoulder domain. The soulder is composed of 2 DCTN1 subunits, 4 DCTN2 and 2 DCTN3. The 4 DCNT2 (via N-terminus) bind the ACTR1A filament and act as molecular rulers to determine the length. The pointed end is important for binding dynein-dynactin cargo adapters. Consists of 4 subunits: ACTR10, DCNT4, DCTN5 and DCTN6. The barbed end is composed of a CAPZA1:CAPZB heterodimers, which binds ACTR1A/ACTB filament and dynactin and stabilizes dynactin. Interacts with ATP7B, but not ATP7A, in a copper-dependent manner. Interacts with ANK2; this interaction is required for localization at costameres. Interacts with N4BP2L1.

The protein localises to the cytoplasm. It is found in the cytoskeleton. Its subcellular location is the microtubule organizing center. The protein resides in the centrosome. It localises to the stress fiber. The protein localises to the cell cortex. It is found in the myofibril. Its subcellular location is the sarcomere. In terms of biological role, part of the dynactin complex that activates the molecular motor dynein for ultra-processive transport along microtubules. The protein is Dynactin subunit 4 of Homo sapiens (Human).